A 338-amino-acid chain; its full sequence is GTPase Obg (338 aa).

In terms of domain architecture, Obg spans 1–159 (MQFIDEVKIH…RWLRLELKLL (159 aa)). Residues 160–331 (ADVGLLGFPN…LLDEIARSLW (172 aa)) form the OBG-type G domain. Residues 166–173 (GFPNVGKS), 191–195 (FTTLK), 213–216 (DIPG), 283–286 (NKMD), and 312–314 (SAA) contribute to the GTP site. Serine 173 and threonine 193 together coordinate Mg(2+).

This sequence belongs to the TRAFAC class OBG-HflX-like GTPase superfamily. OBG GTPase family. Monomer. The cofactor is Mg(2+).

The protein localises to the cytoplasm. In terms of biological role, an essential GTPase which binds GTP, GDP and possibly (p)ppGpp with moderate affinity, with high nucleotide exchange rates and a fairly low GTP hydrolysis rate. Plays a role in control of the cell cycle, stress response, ribosome biogenesis and in those bacteria that undergo differentiation, in morphogenesis control. This Geobacter sulfurreducens (strain ATCC 51573 / DSM 12127 / PCA) protein is GTPase Obg.